We begin with the raw amino-acid sequence, 179 residues long: ATP-dependent protease subunit HslV (179 aa).

T7 is an active-site residue. Na(+)-binding residues include G162, C165, and T168.

Belongs to the peptidase T1B family. HslV subfamily. A double ring-shaped homohexamer of HslV is capped on each side by a ring-shaped HslU homohexamer. The assembly of the HslU/HslV complex is dependent on binding of ATP.

The protein resides in the cytoplasm. It carries out the reaction ATP-dependent cleavage of peptide bonds with broad specificity.. Allosterically activated by HslU binding. In terms of biological role, protease subunit of a proteasome-like degradation complex believed to be a general protein degrading machinery. This is ATP-dependent protease subunit HslV from Aromatoleum aromaticum (strain DSM 19018 / LMG 30748 / EbN1) (Azoarcus sp. (strain EbN1)).